A 662-amino-acid polypeptide reads, in one-letter code: DNA ligase (662 aa).

NAD(+) contacts are provided by residues 31-35 (DKDYD) and 79-80 (SL). Lysine 121 (N6-AMP-lysine intermediate) is an active-site residue. Arginine 143, glutamate 177, and lysine 313 together coordinate NAD(+). 4 residues coordinate Zn(2+): cysteine 406, cysteine 409, cysteine 422, and cysteine 428. The BRCT domain maps to 586-662 (VLESPFMGKT…LSEEEFENMI (77 aa)).

Belongs to the NAD-dependent DNA ligase family. LigA subfamily. Requires Mg(2+) as cofactor. The cofactor is Mn(2+).

The catalysed reaction is NAD(+) + (deoxyribonucleotide)n-3'-hydroxyl + 5'-phospho-(deoxyribonucleotide)m = (deoxyribonucleotide)n+m + AMP + beta-nicotinamide D-nucleotide.. In terms of biological role, DNA ligase that catalyzes the formation of phosphodiester linkages between 5'-phosphoryl and 3'-hydroxyl groups in double-stranded DNA using NAD as a coenzyme and as the energy source for the reaction. It is essential for DNA replication and repair of damaged DNA. The protein is DNA ligase of Clostridium perfringens (strain 13 / Type A).